Here is a 336-residue protein sequence, read N- to C-terminus: MSRPSLTRFLIEEQHAGRIDAELRQLITIVSRACKRISIAVSKGTLGGVLGDAGTGNVQGEAQKKLDVLSNDILLEANAWGGHLAACASEEMDHSQPVPDQYPSGDFLLLFDPLDGSSNIDVNVSVGTIFSVLRAPKGTEKPGDEHFLQPGTQQVAAGYCIYGPSTMLVLTLGHGTHAFTLEREEGSFLLTQANMRVPEDTAEYAINMSNQRHWEPAMQAYVGDLLAGKDGARGKDFNMRWIASMVADVHRILTRGGIFIYPWDKKDPSKPGKLRLMYEANPMSMLVEQAGGAATTGRERILDIQPTQLHQRVPVFLGSKNEVAEATRYHLDADKA.

Positions 90, 112, 114, and 115 each coordinate Mg(2+). Substrate contacts are provided by residues 115 to 118, Asn207, and Lys273; that span reads DGSS. Position 279 (Glu279) interacts with Mg(2+).

This sequence belongs to the FBPase class 1 family. In terms of assembly, homotetramer. It depends on Mg(2+) as a cofactor.

Its subcellular location is the cytoplasm. The enzyme catalyses beta-D-fructose 1,6-bisphosphate + H2O = beta-D-fructose 6-phosphate + phosphate. It participates in carbohydrate biosynthesis; gluconeogenesis. The sequence is that of Fructose-1,6-bisphosphatase class 1 from Xanthomonas euvesicatoria pv. vesicatoria (strain 85-10) (Xanthomonas campestris pv. vesicatoria).